The chain runs to 164 residues: Small ribosomal subunit protein uS5 (164 aa).

An S5 DRBM domain is found at 11–74; that stretch reads LKEKLISVNR…EKARKNMIII (64 aa).

The protein belongs to the universal ribosomal protein uS5 family. As to quaternary structure, part of the 30S ribosomal subunit. Contacts proteins S4 and S8.

Its function is as follows. With S4 and S12 plays an important role in translational accuracy. In terms of biological role, located at the back of the 30S subunit body where it stabilizes the conformation of the head with respect to the body. The chain is Small ribosomal subunit protein uS5 from Buchnera aphidicola subsp. Cinara cedri (strain Cc).